The following is a 227-amino-acid chain: Aspartyl protease inhibitor (227 aa).

Residues 1–15 (MKLVVLCVLCGIALA) form the signal peptide. Basic and acidic residues predominate over residues 88–109 (SLKSRMAGKKEKAVTPKEEDLP). The disordered stretch occupies residues 88-116 (SLKSRMAGKKEKAVTPKEEDLPKAPQKPS). A disulfide bond links C131 and C223.

Belongs to the protease inhibitor I33 family.

It localises to the secreted. In terms of biological role, aspartyl protease inhibitor. This Ostertagia ostertagi (Brown stomach worm) protein is Aspartyl protease inhibitor (API).